A 31-amino-acid polypeptide reads, in one-letter code: QDTYLNAKKYIEFYLVVDNGMFXKYSXXFTV.

Gln-1 is modified (pyrrolidone carboxylic acid). Residues Lys-9–Val-31 form the Peptidase M12B domain. Position 12 (Glu-12) interacts with Ca(2+).

In terms of assembly, monomer. Zn(2+) is required as a cofactor. Post-translationally, contains 9 disulfide bonds. As to expression, expressed by the venom gland.

The protein resides in the secreted. With respect to regulation, inhibited by 1,10-phenanthroline. In terms of biological role, snake venom zinc metalloprotease that has potent hemorrhagic activity, fibrinogenolytic activity on the alpha-subunit of human fibrinogen (FGA) in vitro and provokes necrosis in skin, muscle and lung tissues. May contribute to local edema and ecchymosis induced by venom. Hydrolyzes model substrate (beta-chain of insulin) at Ala(14)-Leu(15). In Borikenophis portoricensis (Puerto Rican racer), this protein is Zinc metalloproteinase alsophinase.